We begin with the raw amino-acid sequence, 513 residues long: MGIGTLLLFTFLGLVAGATAVWLITRTLLKQRTEGILAEARREAEVIKQKKLLEVKEKFLQLKGDLEKQVAQRNSKLQSVESKLKSREQTLNQRQEDITKKGQEMDLMRENLTAQLSVIEKKKTELDELKTREQAHLESLSGLSAAEAKDRLVESLKDEAKGQASAYVNEIIEEAKMTANKEAKRIVIQSIQRVATETAIENSVTVFHIESDEIKGRIIGREGRNIRALEAAAGIEIIVDDTPEAIVLSGFDPVRREIARLALHQLVQDGRIHPARIEEVVSKVRKQVEEEIIETGKRTVIDLGIHGLHPELIRLIGKMKYRSSYGQNLLQHSRETANLCAIMASELGLNPKKAKRAGLLHDIGKVPDDEPELPHALLGMKLCEKFKEKPDICNAVGAHHDEVEMMSLIAPIVQVCDAISGARPGARREIVEAYIKRLNDLEQLAMSYPGVIKTYAIQAGRELRVIVGADKTDDASVETLSNEIAKRIQDEMTYPGQVKITVIRESRSVSYAK.

A helical membrane pass occupies residues 3-23 (IGTLLLFTFLGLVAGATAVWL). Residues 77-96 (LQSVESKLKSREQTLNQRQE) form a disordered region. Basic and acidic residues predominate over residues 82–96 (SKLKSREQTLNQRQE). In terms of domain architecture, KH spans 203 to 263 (SVTVFHIESD…VRREIARLAL (61 aa)). An HD domain is found at 329–422 (LLQHSRETAN…VQVCDAISGA (94 aa)).

This sequence belongs to the RNase Y family.

It localises to the cell membrane. In terms of biological role, endoribonuclease that initiates mRNA decay. The polypeptide is Ribonuclease Y (Porphyromonas gingivalis (strain ATCC BAA-308 / W83)).